Reading from the N-terminus, the 689-residue chain is Glycine--tRNA ligase beta subunit (689 aa).

The protein belongs to the class-II aminoacyl-tRNA synthetase family. In terms of assembly, tetramer of two alpha and two beta subunits.

It is found in the cytoplasm. It carries out the reaction tRNA(Gly) + glycine + ATP = glycyl-tRNA(Gly) + AMP + diphosphate. The polypeptide is Glycine--tRNA ligase beta subunit (Coxiella burnetii (strain RSA 331 / Henzerling II)).